The following is a 179-amino-acid chain: MYHVVAATTNPAKIKAITLAFTDVFGAENCRIEGVDVDSGVPRQPLGSIETRTGARNRVMMARQVRPEADFWVGVEAGIEESMTFAWMVIENTHLRGESRSASLVLPESILHGIREGRELGDEMERLTGVQNIKHKGGAIGVFTDGKLSRTSVYHQALLLALVPFHNPIYQIPVQAAKP.

8 to 13 serves as a coordination point for substrate; the sequence is TTNPAK. The Mg(2+) site is built by Asp-38 and Glu-68. Position 68–69 (68–69) interacts with substrate; sequence EA.

The protein belongs to the YjjX NTPase family. In terms of assembly, homodimer. Mg(2+) serves as cofactor. The cofactor is Mn(2+).

It catalyses the reaction XTP + H2O = XDP + phosphate + H(+). It carries out the reaction ITP + H2O = IDP + phosphate + H(+). Phosphatase that hydrolyzes non-canonical purine nucleotides such as XTP and ITP to their respective diphosphate derivatives. Probably excludes non-canonical purines from DNA/RNA precursor pool, thus preventing their incorporation into DNA/RNA and avoiding chromosomal lesions. This chain is Inosine/xanthosine triphosphatase, found in Pectobacterium carotovorum subsp. carotovorum (strain PC1).